The primary structure comprises 71 residues: Large ribosomal subunit protein bL28 (71 aa).

This sequence belongs to the bacterial ribosomal protein bL28 family.

In Rubrobacter xylanophilus (strain DSM 9941 / JCM 11954 / NBRC 16129 / PRD-1), this protein is Large ribosomal subunit protein bL28.